The chain runs to 211 residues: Large ribosomal subunit protein uL4 (211 aa).

Disordered stretches follow at residues 1–28 and 48–99; these read MAQA…ETEP and TAST…GPRY. Over residues 10–28 the composition is skewed to basic and acidic residues; sequence RTGRRSEMELKGPRFETEP.

It belongs to the universal ribosomal protein uL4 family. As to quaternary structure, part of the 50S ribosomal subunit.

One of the primary rRNA binding proteins, this protein initially binds near the 5'-end of the 23S rRNA. It is important during the early stages of 50S assembly. It makes multiple contacts with different domains of the 23S rRNA in the assembled 50S subunit and ribosome. Functionally, forms part of the polypeptide exit tunnel. In Rubrobacter xylanophilus (strain DSM 9941 / JCM 11954 / NBRC 16129 / PRD-1), this protein is Large ribosomal subunit protein uL4.